The sequence spans 129 residues: Small ribosomal subunit protein uS11 (129 aa).

The disordered stretch occupies residues 108-129 (TPIPHNGTRPPKRVLKRLRLKK). A compositionally biased stretch (basic residues) spans 117–129 (PPKRVLKRLRLKK).

This sequence belongs to the universal ribosomal protein uS11 family. As to quaternary structure, part of the 30S ribosomal subunit. Interacts with proteins S7 and S18. Binds to IF-3.

In terms of biological role, located on the platform of the 30S subunit, it bridges several disparate RNA helices of the 16S rRNA. Forms part of the Shine-Dalgarno cleft in the 70S ribosome. The protein is Small ribosomal subunit protein uS11 of Mycoplasmopsis synoviae (strain 53) (Mycoplasma synoviae).